Reading from the N-terminus, the 150-residue chain is 16.6 kDa heat shock protein (150 aa).

Positions alanine 31 to glycine 150 constitute a sHSP domain.

It belongs to the small heat shock protein (HSP20) family. As to quaternary structure, may form oligomeric structures.

The protein localises to the cytoplasm. The chain is 16.6 kDa heat shock protein (HSP16.6) from Oryza sativa subsp. japonica (Rice).